Here is a 364-residue protein sequence, read N- to C-terminus: 2-oxoadipate dioxygenase/decarboxylase, chloroplastic/amyloplastic (364 aa).

The N-terminal 49 residues, 1–49 (MAVALAGARSPGAGAILSLRRLAPAAAAPVRLGGSGTPGTRRRRGIAMA), are a transit peptide targeting the chloroplast. Positions 107 and 111 each coordinate 2-oxoadipate. H107 serves as a coordination point for Fe(2+). H243 lines the Fe(2+) pocket. The 2-oxoadipate site is built by Q289 and Y313. Position 315 (E315) interacts with Fe(2+).

The protein belongs to the 2-oxoadipate dioxygenase/decarboxylase family. Requires Fe(2+) as cofactor. As to expression, expressed in roots, stems, leaf sheaths, leaf blades, panicles, and endosperm.

The protein resides in the plastid. It is found in the chloroplast. The protein localises to the amyloplast. The enzyme catalyses 2-oxoadipate + O2 = (R)-2-hydroxyglutarate + CO2. It functions in the pathway amino-acid degradation. Functionally, catalyzes the decarboxylation and hydroxylation of 2-oxoadipate (2OA) to form D-2-hydroxyglutarate (D-2-HGA). Is involved in a D-lysine catabolic pathway. Involved in the regulation of starch synthesis and amyloplast development within the peripheral endosperm during the grain-filling stage. The polypeptide is 2-oxoadipate dioxygenase/decarboxylase, chloroplastic/amyloplastic (Oryza sativa subsp. japonica (Rice)).